A 344-amino-acid chain; its full sequence is Cyclin-dependent kinase 7 (344 aa).

The Protein kinase domain occupies 12-294 (YEKLDFLGEG…ASQALKMRYF (283 aa)). ATP-binding positions include 18-26 (LGEGQFATV) and lysine 41. Catalysis depends on aspartate 136, which acts as the Proton acceptor. Serine 163 is subject to Phosphoserine; by CDK1 and CDK2. The residue at position 169 (threonine 169) is a Phosphothreonine; by CDK2.

It belongs to the protein kinase superfamily. CMGC Ser/Thr protein kinase family. CDC2/CDKX subfamily. Probably associates with cyclin-H (ccnh) and mat1 to form a multimeric active enzyme. Post-translationally, phosphorylation of Ser-163 during mitosis inactivates the enzyme. Phosphorylation of Thr-169 is required for activity. Phosphorylated at Ser-163 and Thr-169 by CDK2.

The protein localises to the nucleus. The enzyme catalyses L-seryl-[protein] + ATP = O-phospho-L-seryl-[protein] + ADP + H(+). The catalysed reaction is L-threonyl-[protein] + ATP = O-phospho-L-threonyl-[protein] + ADP + H(+). It carries out the reaction [DNA-directed RNA polymerase] + ATP = phospho-[DNA-directed RNA polymerase] + ADP + H(+). With respect to regulation, phosphorylation at Thr-169 is required for enzymatic activity. Its function is as follows. Serine/threonine kinase involved in cell cycle control and in RNA polymerase II-mediated RNA transcription. Cyclin-dependent kinases (CDKs) are activated by the binding to a cyclin and mediate the progression through the cell cycle. Each different complex controls a specific transition between 2 subsequent phases in the cell cycle. Required for both activation and complex formation of cdk1/cyclin-B during G2-M transition, and for activation of cdk2/cyclins during G1-S transition (but not complex formation). cdk7 is the catalytic subunit of the CDK-activating kinase (CAK) complex. CAK activates the cyclin-associated kinases cdk1, cdk2, cdk4 and cdk6 by threonine phosphorylation, thus regulating cell cycle progression. Initiates transcription by RNA polymerase II by mediating phosphorylation of polr2a at 'Ser-5' of the repetitive C-terminal domain (CTD) when polr2a is in complex with DNA, promoting dissociation from DNA and initiation. CAK complexed to the core-TFIIH basal transcription factor activates RNA polymerase II by serine phosphorylation of the CTD of polr2a, allowing its escape from the promoter and elongation of the transcripts. This is Cyclin-dependent kinase 7 (cdk7) from Carassius auratus (Goldfish).